A 338-amino-acid polypeptide reads, in one-letter code: MRILGIETSCDETGVAIYDDEKGLLAHQLYSQVKLHADYGGVVPELASRDHVKKTIPLIKAALNDAGLTKDDIDGIAYTAGPGLVGALLVGSTIGRSIAYAWDVPAIPVHHMEGHLLAPMLEDEPPAFPFVALLVSGGHTMMVEVKGIGEYQILGESVDDAAGEAFDKTAKLMGLDYPGGPLLSKLAESGTKGRFKFPRPMTDRPGLDFSFSGLKTFAANTIRGNEDDLQTRADIAFAFQEAVVDTLAIKCRRALKQTGMKRLVMAGGVSANKYLRQELEVMMKKIGGEVYYPRTEFCTDNGAMIAYAGMQRLKNGETTDLAVQAKPRWPIDQLAPIK.

Residues H111 and H115 each coordinate Fe cation. Substrate contacts are provided by residues 134 to 138 (LVSGG), D167, G180, and N272. D300 contacts Fe cation.

This sequence belongs to the KAE1 / TsaD family. Fe(2+) serves as cofactor.

The protein localises to the cytoplasm. The catalysed reaction is L-threonylcarbamoyladenylate + adenosine(37) in tRNA = N(6)-L-threonylcarbamoyladenosine(37) in tRNA + AMP + H(+). Functionally, required for the formation of a threonylcarbamoyl group on adenosine at position 37 (t(6)A37) in tRNAs that read codons beginning with adenine. Is involved in the transfer of the threonylcarbamoyl moiety of threonylcarbamoyl-AMP (TC-AMP) to the N6 group of A37, together with TsaE and TsaB. TsaD likely plays a direct catalytic role in this reaction. The chain is tRNA N6-adenosine threonylcarbamoyltransferase from Aliivibrio fischeri (strain MJ11) (Vibrio fischeri).